A 33-amino-acid polypeptide reads, in one-letter code: Brevinin-2GRb (33 aa).

As to expression, expressed by the skin glands.

It localises to the secreted. Antimicrobial peptide active against the Gram-positive bacterium S.aureus (MIC=25 uM) and against the Gram-negative bacteria E.coli (MIC=6 uM). Has no antifungal activity against C.albicans. Shows hemolytic activity against human erythrocytes only at high concentrations (LC(50)=180 uM). In Odorrana grahami (Yunnanfu frog), this protein is Brevinin-2GRb.